Reading from the N-terminus, the 418-residue chain is Delta(14)-sterol reductase TM7SF2 (418 aa).

The next 6 helical transmembrane spans lie at 13–35 (FGGP…HLLL), 62–81 (ALLL…LLPA), 102–124 (GFQA…LPLS), 129–148 (MLLP…SLLL), 255–277 (FGFM…QAQF), and 287–304 (WPLA…YYIF). NADP(+)-binding positions include Lys-311, Arg-315, Leu-338, Trp-343, and 350–351 (NY). The helical transmembrane segment at 355 to 377 (LIMALAWSLPCGVFHLLPYFYFL) threads the bilayer. Residues Asp-390, 394–398 (CRQKY), and Tyr-405 contribute to the NADP(+) site.

This sequence belongs to the ERG4/ERG24 family. Highly expressed in liver and brain.

The protein localises to the microsome membrane. It localises to the endoplasmic reticulum membrane. It catalyses the reaction 4,4-dimethyl-5alpha-cholesta-8,24-dien-3beta-ol + NADP(+) = 4,4-dimethyl-5alpha-cholesta-8,14,24-trien-3beta-ol + NADPH + H(+). It carries out the reaction 5alpha-cholest-8,14-dien-3beta-ol + NADPH + H(+) = 5alpha-cholest-8-en-3beta-ol + NADP(+). The enzyme catalyses 4,4-dimethyl-8,14-cholestadien-3beta-ol + NADPH + H(+) = 4,4-dimethyl-5alpha-cholest-8-en-3beta-ol + NADP(+). The protein operates within steroid biosynthesis; cholesterol biosynthesis. Catalyzes the reduction of the C14-unsaturated bond of lanosterol, as part of the metabolic pathway leading to cholesterol biosynthesis. In Bos taurus (Bovine), this protein is Delta(14)-sterol reductase TM7SF2 (TM7SF2).